Here is a 300-residue protein sequence, read N- to C-terminus: Protoheme IX farnesyltransferase (300 aa).

A run of 9 helical transmembrane segments spans residues 24 to 44 (VTQL…PGMV), 48 to 68 (VLIG…AINC), 94 to 114 (PQIL…LYTF), 118 to 138 (LTMW…TLLL), 146 to 166 (IVIG…AVTG), 172 to 192 (AWIL…VLAL), 217 to 237 (LHIL…FISG), 239 to 259 (SGAV…AYAW), and 278 to 298 (IVYL…RPLL).

Belongs to the UbiA prenyltransferase family. Protoheme IX farnesyltransferase subfamily.

It localises to the cell inner membrane. It catalyses the reaction heme b + (2E,6E)-farnesyl diphosphate + H2O = Fe(II)-heme o + diphosphate. It functions in the pathway porphyrin-containing compound metabolism; heme O biosynthesis; heme O from protoheme: step 1/1. Functionally, converts heme B (protoheme IX) to heme O by substitution of the vinyl group on carbon 2 of heme B porphyrin ring with a hydroxyethyl farnesyl side group. In Burkholderia vietnamiensis (strain G4 / LMG 22486) (Burkholderia cepacia (strain R1808)), this protein is Protoheme IX farnesyltransferase.